Reading from the N-terminus, the 161-residue chain is HMG1/2-like protein (161 aa).

Disordered stretches follow at residues Met1–Pro46, Phe60–Pro91, and Gly113–Glu161. Basic and acidic residues-rich tracts occupy residues Ala10–Ala27 and Ala77–Lys89. The HMG box DNA-binding region spans Pro42–Asn111. The span at Glu114–Lys123 shows a compositional bias: low complexity. A compositionally biased stretch (acidic residues) spans Asn145–Glu161.

The protein belongs to the HMGB family.

The protein localises to the nucleus. The polypeptide is HMG1/2-like protein (Triticum aestivum (Wheat)).